The sequence spans 394 residues: 8-amino-7-oxononanoate synthase (394 aa).

Position 21 (arginine 21) interacts with substrate. 112–113 (GY) contacts pyridoxal 5'-phosphate. Histidine 137 serves as a coordination point for substrate. Pyridoxal 5'-phosphate contacts are provided by serine 183, histidine 211, and threonine 239. Lysine 242 carries the N6-(pyridoxal phosphate)lysine modification. Threonine 358 contacts substrate.

The protein belongs to the class-II pyridoxal-phosphate-dependent aminotransferase family. BioF subfamily. As to quaternary structure, homodimer. The cofactor is pyridoxal 5'-phosphate.

It catalyses the reaction 6-carboxyhexanoyl-[ACP] + L-alanine + H(+) = (8S)-8-amino-7-oxononanoate + holo-[ACP] + CO2. It functions in the pathway cofactor biosynthesis; biotin biosynthesis. Catalyzes the decarboxylative condensation of pimeloyl-[acyl-carrier protein] and L-alanine to produce 8-amino-7-oxononanoate (AON), [acyl-carrier protein], and carbon dioxide. The protein is 8-amino-7-oxononanoate synthase of Paraburkholderia phymatum (strain DSM 17167 / CIP 108236 / LMG 21445 / STM815) (Burkholderia phymatum).